The primary structure comprises 761 residues: Cyclin-F (761 aa).

The Nuclear localization signal 1 signature appears at 19–27; it reads RRRIKRRPR. The 48-residue stretch at 28-75 folds into the F-box domain; sequence VLTLLSLPEDVLLYVLECLPAVDILSMREVHPHLRSLVDSHSSVWARA. Residues 300–411 form the Cyclin N-terminal domain; it reads NKSSIFTTQK…EIISALEGKI (112 aa). Short sequence motifs (d box) lie at residues 316-319 and 355-358; these read RYIL and RAKL. Disordered regions lie at residues 575-594 and 677-761; these read NKTKRRREESIQEDRGSFVT and AENG…SDEL. Over residues 580–590 the composition is skewed to basic and acidic residues; that stretch reads RREESIQEDRG. Positions 589–745 are PEST; sequence RGSFVTTPTA…LLKASRRQVK (157 aa). A compositionally biased stretch (low complexity) spans 691–718; it reads SSGYSSVSSGGSPTSSSSPGLPFTPTPG. Residues 739-749 are compositionally biased toward basic residues; that stretch reads ASRRQVKRKNQ.

It belongs to the cyclin family. Cyclin AB subfamily. Component of the SCF(CCNF) complex.

It is found in the nucleus. The protein localises to the cytoplasm. The protein resides in the perinuclear region. It localises to the cytoskeleton. Its subcellular location is the microtubule organizing center. It is found in the centrosome. The protein localises to the centriole. Functionally, substrate recognition component of the SCF(CCNF) E3 ubiquitin-protein ligase complex which mediates the ubiquitination and subsequent proteasomal degradation of target proteins. The SCF(CCNF) E3 ubiquitin-protein ligase complex is an integral component of the ubiquitin proteasome system (UPS) and links proteasome degradation to the cell cycle. Mediates the substrate recognition and the proteasomal degradation of various target proteins during G2 phase involved in the regulation of cell cycle progression and in the maintenance of genome stability. The chain is Cyclin-F (ccnf) from Xenopus laevis (African clawed frog).